The primary structure comprises 223 residues: Octanoyltransferase (223 aa).

Residues 30–214 enclose the BPL/LPL catalytic domain; that stretch reads DLDRDCFLLT…IVADLFGEFT (185 aa). Residues 75 to 82, 144 to 146, and 157 to 159 each bind substrate; these read RGGEITYH, SIG, and GFA. Cysteine 175 functions as the Acyl-thioester intermediate in the catalytic mechanism.

It belongs to the LipB family.

The protein resides in the cytoplasm. The catalysed reaction is octanoyl-[ACP] + L-lysyl-[protein] = N(6)-octanoyl-L-lysyl-[protein] + holo-[ACP] + H(+). It functions in the pathway protein modification; protein lipoylation via endogenous pathway; protein N(6)-(lipoyl)lysine from octanoyl-[acyl-carrier-protein]: step 1/2. In terms of biological role, catalyzes the transfer of endogenously produced octanoic acid from octanoyl-acyl-carrier-protein onto the lipoyl domains of lipoate-dependent enzymes. Lipoyl-ACP can also act as a substrate although octanoyl-ACP is likely to be the physiological substrate. This chain is Octanoyltransferase, found in Desulfotalea psychrophila (strain LSv54 / DSM 12343).